The following is a 393-amino-acid chain: S-adenosylmethionine synthase (393 aa).

H16 provides a ligand contact to ATP. D18 is a binding site for Mg(2+). E44 provides a ligand contact to K(+). L-methionine is bound by residues E57 and Q100. The interval 100-110 is flexible loop; sequence QSNDIAQGVDQ. ATP-binding positions include 167-169, 238-239, D247, 253-254, A270, and K274; these read DAK, RF, and RK. D247 contacts L-methionine. L-methionine is bound at residue K278.

The protein belongs to the AdoMet synthase family. Homotetramer; dimer of dimers. Mg(2+) serves as cofactor. Requires K(+) as cofactor.

The protein localises to the cytoplasm. It catalyses the reaction L-methionine + ATP + H2O = S-adenosyl-L-methionine + phosphate + diphosphate. It functions in the pathway amino-acid biosynthesis; S-adenosyl-L-methionine biosynthesis; S-adenosyl-L-methionine from L-methionine: step 1/1. In terms of biological role, catalyzes the formation of S-adenosylmethionine (AdoMet) from methionine and ATP. The overall synthetic reaction is composed of two sequential steps, AdoMet formation and the subsequent tripolyphosphate hydrolysis which occurs prior to release of AdoMet from the enzyme. The sequence is that of S-adenosylmethionine synthase from Methylibium petroleiphilum (strain ATCC BAA-1232 / LMG 22953 / PM1).